Reading from the N-terminus, the 612-residue chain is E3 ubiquitin-protein ligase synoviolin (612 aa).

The Cytoplasmic portion of the chain corresponds to 1–4 (MFRT). The tract at residues 1–251 (MFRTAVMMAA…LFAIRPMYLA (251 aa)) is involved in FAM8A1 interaction. The helical transmembrane segment at 5–25 (AVMMAASLALTGAVVAHAYYL) threads the bilayer. An interaction with SEL1L region spans residues 21–42 (HAYYLKHQFYPTVVYLTKSSPS). At 26-41 (KHQFYPTVVYLTKSSP) the chain is on the lumenal side. The helical transmembrane segment at 42–62 (SMAVLYIQAFVLVFLLGKVMG) threads the bilayer. The Cytoplasmic portion of the chain corresponds to 63–98 (KVFFGQLRAAEMEHLLERSWYAVTETCLAFTVFRDD). The chain crosses the membrane as a helical span at residues 99-119 (FSPRFVALFTLLLFLKCFHWL). Residues 120–140 (AEDRVDFMERSPNISWLFHCR) are Lumenal-facing. A helical transmembrane segment spans residues 141–161 (IVSLMFLLGILDFLFVSHAYH). The Cytoplasmic portion of the chain corresponds to 162-169 (SILTRGAS). A helical membrane pass occupies residues 170–190 (VQLVFGFEYAILMTMVLTIFI). At 191–224 (KYVLHSVDLQSENPWDNKAVYMLYTELFTGFIKV) the chain is on the lumenal side. Residues 225-245 (LLYMAFMTIMIKVHTFPLFAI) form a helical membrane-spanning segment. The segment at 236-270 (KVHTFPLFAIRPMYLAMRQFKKAVTDAIMSRRAIR) is interaction with p53/TP53. Residues 246–612 (RPMYLAMRQF…LQKLESPVAH (367 aa)) lie on the Cytoplasmic side of the membrane. Zn(2+) is bound by residues C291, C294, C307, H309, H312, C315, C326, and C329. Residues 291–330 (CIICREEMVTGAKRLPCNHIFHTSCLRSWFQRQQTCPTCR) form an RING-type; atypical zinc finger. Disordered regions lie at residues 337–375 (SLPA…GLLP) and 393–449 (PVPP…PGFP). 2 stretches are compositionally biased toward pro residues: residues 341–375 (QSPP…GLLP) and 393–409 (PVPP…PPPT). Residues 416–434 (PSGAATTTAAGTSTSAPAP) show a composition bias toward low complexity. Residues 435–449 (GSVPGPEAGPAPGFP) are compositionally biased toward pro residues. The segment at 474–529 (GFAGLTPEELRALEGHERQHLEARLQSLRNIHTLLDAAMLQINQYLTVLASLGPPR) is HAF-H domain; necessary to form higher-order Hrd1 complexes. Residues 530-612 (PATSVNPTEE…LQKLESPVAH (83 aa)) are disordered. Over residues 539-559 (ETASTVVSAAPSTSAPSSEAP) the composition is skewed to low complexity. A compositionally biased stretch (pro residues) spans 560–570 (TPSPGASPPIP). Over residues 586 to 595 (ELPEDGEPDA) the composition is skewed to acidic residues. The residue at position 608 (S608) is a Phosphoserine.

It belongs to the HRD1 family. In terms of assembly, homodimer. Interacts with p53/TP53. Interacts with HTT. Component of the HRD1 complex, which comprises at least SYNV1/HRD1, DERL1/2, FAM8A1, HERPUD1/HERP, OS9, SEL1L and UBE2J1. FAM8A1 is stabilized by interaction with SYNV1, which prevents its proteasomal degradation. OS9 and UBE2J1 recruitment to the complex may be mediated by SEL1L. SYNV1 assembles with SEL1L and FAM8A1 through its transmembrane domains, but interaction with its cytoplasmic domain is required to confer stability to FAM8A1 and enhance recruitment of HERPUD1. The HRD1 complex also associates with VIMP and may transfer misfolded proteins from the endoplasmic reticulum to VCP. May form a complex with ERLEC1; HSPA5; OS9 and SEL1L. Interacts with VCP. Interacts with UBXN6. Interacts with BAG6. Interacts with NFE2L1. Interacts (via N-terminus) with components of the pre-B cell receptor, including IGLL1 and VPREB1A. Interacts with CREB3L3; this interaction leads to CREB3L3 ubiquitination and proteasomal degradation. Auto-ubiquitinated. Deubiquitinated by USP19. Widely expressed, with highest levels in bone, spleen, lung and testis. In the brain, present in neurons but not in glial cells. Up-regulated in synovial tissues from mice with collagen-induced arthritis (at protein level). Expressed in the liver.

The protein localises to the endoplasmic reticulum membrane. It catalyses the reaction S-ubiquitinyl-[E2 ubiquitin-conjugating enzyme]-L-cysteine + [acceptor protein]-L-lysine = [E2 ubiquitin-conjugating enzyme]-L-cysteine + N(6)-ubiquitinyl-[acceptor protein]-L-lysine.. It participates in protein modification; protein ubiquitination. Functionally, E3 ubiquitin-protein ligase which accepts ubiquitin specifically from endoplasmic reticulum-associated UBC7 E2 ligase and transfers it to substrates, promoting their degradation. Component of the endoplasmic reticulum quality control (ERQC) system also called ER-associated degradation (ERAD) involved in ubiquitin-dependent degradation of misfolded endoplasmic reticulum proteins. Also promotes the degradation of normal but naturally short-lived proteins such as SGK. Protects cells from ER stress-induced apoptosis. Sequesters p53/TP53 in the cytoplasm and promotes its degradation, thereby negatively regulating its biological function in transcription, cell cycle regulation and apoptosis. Required for embryogenesis. Mediates the ubiquitination and subsequent degradation of cytoplasmic NFE2L1. During the early stage of B cell development, required for degradation of the pre-B cell receptor (pre-BCR) complex, hence supporting further differentiation into mature B cells. The chain is E3 ubiquitin-protein ligase synoviolin (Syvn1) from Mus musculus (Mouse).